Here is a 266-residue protein sequence, read N- to C-terminus: Zinc transport system ATP-binding protein TroB (266 aa).

The ABC transporter domain occupies 11–243 (VQVDDLTLAY…YVQRAYGGRI (233 aa)). Residue 43–50 (GPNGAGKS) coordinates ATP.

This sequence belongs to the ABC transporter superfamily.

Its function is as follows. Part of an ATP-driven transport system TroABCD for zinc. The sequence is that of Zinc transport system ATP-binding protein TroB (troB) from Treponema pallidum (strain Nichols).